The following is a 346-amino-acid chain: Aspartate-semialdehyde dehydrogenase (346 aa).

Residues 12–15 (SGAV) and 40–41 (RS) each bind NADP(+). Residue arginine 101 participates in phosphate binding. Catalysis depends on cysteine 131, which acts as the Acyl-thioester intermediate. Glutamine 158 provides a ligand contact to substrate. An NADP(+)-binding site is contributed by 161-162 (SG). Lysine 225 is a phosphate binding site. Arginine 246 serves as a coordination point for substrate. Histidine 253 functions as the Proton acceptor in the catalytic mechanism. Position 326 (glutamine 326) interacts with NADP(+).

The protein belongs to the aspartate-semialdehyde dehydrogenase family. As to quaternary structure, homodimer.

The enzyme catalyses L-aspartate 4-semialdehyde + phosphate + NADP(+) = 4-phospho-L-aspartate + NADPH + H(+). It participates in amino-acid biosynthesis; L-lysine biosynthesis via DAP pathway; (S)-tetrahydrodipicolinate from L-aspartate: step 2/4. Its pathway is amino-acid biosynthesis; L-methionine biosynthesis via de novo pathway; L-homoserine from L-aspartate: step 2/3. The protein operates within amino-acid biosynthesis; L-threonine biosynthesis; L-threonine from L-aspartate: step 2/5. Catalyzes the NADPH-dependent formation of L-aspartate-semialdehyde (L-ASA) by the reductive dephosphorylation of L-aspartyl-4-phosphate. This chain is Aspartate-semialdehyde dehydrogenase, found in Helicobacter pylori (strain J99 / ATCC 700824) (Campylobacter pylori J99).